A 215-amino-acid polypeptide reads, in one-letter code: 3-isopropylmalate dehydratase small subunit (215 aa).

The protein belongs to the LeuD family. LeuD type 1 subfamily. In terms of assembly, heterodimer of LeuC and LeuD.

The enzyme catalyses (2R,3S)-3-isopropylmalate = (2S)-2-isopropylmalate. The protein operates within amino-acid biosynthesis; L-leucine biosynthesis; L-leucine from 3-methyl-2-oxobutanoate: step 2/4. In terms of biological role, catalyzes the isomerization between 2-isopropylmalate and 3-isopropylmalate, via the formation of 2-isopropylmaleate. This chain is 3-isopropylmalate dehydratase small subunit, found in Xanthomonas oryzae pv. oryzae (strain MAFF 311018).